The following is a 1072-amino-acid chain: Vacuolar membrane protease (1072 aa).

At 1 to 9 (MINPISFRP) the chain is on the cytoplasmic side. A helical transmembrane segment spans residues 10-30 (GPVTFWTTLIYLALLIPIVII). Residues 31 to 404 (NEKTPAAPKT…SFVLFGLRGM (374 aa)) are Vacuolar-facing. Asn48, Asn116, Asn119, and Asn128 each carry an N-linked (GlcNAc...) asparagine glycan. Zn(2+) is bound by residues His185 and Asp197. Catalysis depends on Glu231, which acts as the Proton acceptor. Zn(2+) is bound by residues Glu232, Glu257, and His330. A helical transmembrane segment spans residues 405–425 (FAWSLTLLIATPLVLVGITWL). Residues 426–457 (LRNLDKDYFFTSTVKTKEHPEYEAVPIGGWKG) lie on the Cytoplasmic side of the membrane. Residues 458-478 (FFRFPFALGVAVFFTISSALL) traverse the membrane as a helical segment. The Vacuolar portion of the chain corresponds to 479–492 (MNKVNPLIVYSSRY). The helical transmembrane segment at 493-513 (SVWVMMVSIFYFSFWMIMRGA) threads the bilayer. At 514-523 (NFVRPSALHR) the chain is on the cytoplasmic side. The helical transmembrane segment at 524 to 544 (GYANLWLFVFGWIVLVAVTAL) threads the bilayer. Residues 545-554 (EDRRRIAAGY) lie on the Vacuolar side of the membrane. The helical transmembrane segment at 555–575 (IFVFLESAIFLSCLISFVELL) threads the bilayer. The Cytoplasmic segment spans residues 576–747 (AVPRKSSYAL…YDHEQEWSGH (172 aa)). The segment at 593–713 (GQEHDHNGYQ…GTNDRGRTTF (121 aa)) is disordered. The span at 606–617 (DSTDEPSLRARA) shows a compositional bias: basic and acidic residues. The span at 643–661 (GTTNGLSTAPSVAAHSSQP) shows a compositional bias: polar residues. The helical transmembrane segment at 748–768 (LPSWAWFFQFLLLGPFMIILA) threads the bilayer. The Vacuolar portion of the chain corresponds to 769–789 (AQTGLMLTDAVYQTGSDGSKL). Residues 790 to 810 (ITPYLIIFVFTVLLILPLTPF) traverse the membrane as a helical segment. Over 811–817 (IHRVTHH) the chain is Cytoplasmic. A helical transmembrane segment spans residues 818–838 (IPVFLLVVFIVTLTYNLIAFP). The Vacuolar portion of the chain corresponds to 839 to 1072 (FSANNRYKTF…VEGRKAFKIV (234 aa)). Asn932 and Asn974 each carry an N-linked (GlcNAc...) asparagine glycan.

It belongs to the peptidase M28 family. It depends on Zn(2+) as a cofactor.

The protein resides in the vacuole membrane. May be involved in vacuolar sorting and osmoregulation. The chain is Vacuolar membrane protease from Neurospora crassa (strain ATCC 24698 / 74-OR23-1A / CBS 708.71 / DSM 1257 / FGSC 987).